The primary structure comprises 345 residues: Trace amine-associated receptor 6 (345 aa).

Over 1 to 32 (MSSNSSLLVAVQLCYPNVNGSCVETLYSPGSR) the chain is Extracellular. Asparagine 4 and asparagine 19 each carry an N-linked (GlcNAc...) asparagine glycan. 2 disulfides stabilise this stretch: cysteine 22-cysteine 186 and cysteine 105-cysteine 190. Residues 33-53 (VILYIVFGFGAVLAVFGNLLV) form a helical membrane-spanning segment. The Cytoplasmic segment spans residues 54-68 (MISILHFKQLHSPTN). Residues 69–89 (FLVASLACADFLVGVTVMPFS) traverse the membrane as a helical segment. The Extracellular segment spans residues 90-107 (MVRTVESCWYFGRSFCTF). A helical membrane pass occupies residues 108-128 (HTCCDVAFCYSSLFHLCFISI). At 129–147 (DRYIAVTDPLVYPTKFTVS) the chain is on the cytoplasmic side. The chain crosses the membrane as a helical span at residues 148–168 (VSGICISVSWILPLMYSGAVF). The Extracellular portion of the chain corresponds to 169–202 (YTGVYDDGLEELSDALNCIGGCQTVVNQNWVLID). A helical transmembrane segment spans residues 203–223 (CLSFFIPTFIMIILYGNIFLV). The Cytoplasmic portion of the chain corresponds to 224-259 (ARRQAKKIENTGSKTESSSESYKARVARRERKAAKT). A helical membrane pass occupies residues 260–276 (LGVTVVAFMISWLPYSI). Topologically, residues 277–282 (DSLIDA) are extracellular. The chain crosses the membrane as a helical span at residues 283-302 (FMGFITPAYIYEICCWCAYY). At 303–345 (NSAMNPLIYALFYPWFRKAIKVIVTGQVLKNSSATMNLFSEHI) the chain is on the cytoplasmic side.

It belongs to the G-protein coupled receptor 1 family.

It is found in the cell membrane. Its function is as follows. Olfactory receptor specific for trace amines, such as beta-phenylethylamine (beta-PEA). Trace amine compounds are enriched in animal body fluids and act on trace amine-associated receptors (TAARs) to elicit both intraspecific and interspecific innate behaviors. Beta-PEA-binding causes a conformation change that triggers signaling via G(s)-class of G alpha proteins (GNAL or GNAS). The polypeptide is Trace amine-associated receptor 6 (TAAR6) (Pan troglodytes (Chimpanzee)).